Here is a 398-residue protein sequence, read N- to C-terminus: Glutamyl-tRNA reductase (398 aa).

Residues 45 to 48 (TCNR), S88, 93 to 95 (EDQ), and Q99 each bind substrate. C46 acts as the Nucleophile in catalysis. 168–173 (GAGKMG) is a binding site for NADP(+).

Belongs to the glutamyl-tRNA reductase family. In terms of assembly, homodimer.

The enzyme catalyses (S)-4-amino-5-oxopentanoate + tRNA(Glu) + NADP(+) = L-glutamyl-tRNA(Glu) + NADPH + H(+). The protein operates within porphyrin-containing compound metabolism; protoporphyrin-IX biosynthesis; 5-aminolevulinate from L-glutamyl-tRNA(Glu): step 1/2. In terms of biological role, catalyzes the NADPH-dependent reduction of glutamyl-tRNA(Glu) to glutamate 1-semialdehyde (GSA). The chain is Glutamyl-tRNA reductase (hemA) from Methanothermobacter marburgensis (strain ATCC BAA-927 / DSM 2133 / JCM 14651 / NBRC 100331 / OCM 82 / Marburg) (Methanobacterium thermoautotrophicum).